An 801-amino-acid chain; its full sequence is Phenylalanine--tRNA ligase beta subunit (801 aa).

One can recognise a tRNA-binding domain in the interval 39–153 (AAGLSKIVVG…EDAVPGEEVF (115 aa)). The B5 domain occupies 406–481 (TSDVEVSSTL…RIYGYDRLPT (76 aa)). 4 residues coordinate Mg(2+): Asp-459, Asp-465, Glu-468, and Glu-469. The FDX-ACB domain maps to 708–801 (TKFPAVSRDV…LEEKVNAEVR (94 aa)).

The protein belongs to the phenylalanyl-tRNA synthetase beta subunit family. Type 1 subfamily. Tetramer of two alpha and two beta subunits. The cofactor is Mg(2+).

It localises to the cytoplasm. It catalyses the reaction tRNA(Phe) + L-phenylalanine + ATP = L-phenylalanyl-tRNA(Phe) + AMP + diphosphate + H(+). This is Phenylalanine--tRNA ligase beta subunit from Streptococcus pneumoniae serotype 4 (strain ATCC BAA-334 / TIGR4).